A 401-amino-acid polypeptide reads, in one-letter code: Chalcone synthase 5 (401 aa).

Cys-168 is a catalytic residue.

Belongs to the thiolase-like superfamily. Chalcone/stilbene synthases family.

It carries out the reaction (E)-4-coumaroyl-CoA + 3 malonyl-CoA + 3 H(+) = 2',4,4',6'-tetrahydroxychalcone + 3 CO2 + 4 CoA. It functions in the pathway secondary metabolite biosynthesis; flavonoid biosynthesis. The primary product of this enzyme is 4,2',4',6'-tetrahydroxychalcone (also termed naringenin-chalcone or chalcone) which can under specific conditions spontaneously isomerize into naringenin. This chain is Chalcone synthase 5 (CHS5), found in Sorghum bicolor (Sorghum).